An 87-amino-acid chain; its full sequence is Large ribosomal subunit protein bL27 (87 aa).

The tract at residues 1 to 22 (MAHKKGQGSVKNGRDSRSKRLG) is disordered.

It belongs to the bacterial ribosomal protein bL27 family.

The chain is Large ribosomal subunit protein bL27 from Akkermansia muciniphila (strain ATCC BAA-835 / DSM 22959 / JCM 33894 / BCRC 81048 / CCUG 64013 / CIP 107961 / Muc).